Here is a 1399-residue protein sequence, read N- to C-terminus: DNA-directed RNA polymerase subunit beta' (1399 aa).

Residues cysteine 70, cysteine 72, cysteine 85, and cysteine 88 each contribute to the Zn(2+) site. The Mg(2+) site is built by aspartate 460, aspartate 462, and aspartate 464. Residues cysteine 814, cysteine 888, cysteine 895, and cysteine 898 each contribute to the Zn(2+) site.

It belongs to the RNA polymerase beta' chain family. As to quaternary structure, the RNAP catalytic core consists of 2 alpha, 1 beta, 1 beta' and 1 omega subunit. When a sigma factor is associated with the core the holoenzyme is formed, which can initiate transcription. Mg(2+) serves as cofactor. It depends on Zn(2+) as a cofactor.

It catalyses the reaction RNA(n) + a ribonucleoside 5'-triphosphate = RNA(n+1) + diphosphate. Its function is as follows. DNA-dependent RNA polymerase catalyzes the transcription of DNA into RNA using the four ribonucleoside triphosphates as substrates. This chain is DNA-directed RNA polymerase subunit beta', found in Pseudomonas fluorescens (strain ATCC BAA-477 / NRRL B-23932 / Pf-5).